The sequence spans 60 residues: Short neurotoxin 1 (60 aa).

Intrachain disulfides connect Cys3–Cys22, Cys17–Cys39, Cys41–Cys52, and Cys53–Cys58.

The protein belongs to the three-finger toxin family. Short-chain subfamily. Type I alpha-neurotoxin sub-subfamily. As to expression, expressed by the venom gland.

It is found in the secreted. Its function is as follows. Binds to muscle nicotinic acetylcholine receptor (nAChR) and inhibit acetylcholine from binding to the receptor, thereby impairing neuromuscular transmission. This is Short neurotoxin 1 from Dendroaspis jamesoni kaimosae (Eastern Jameson's mamba).